The sequence spans 357 residues: MQSYSRLMQFKVKDLMIDKRRLVEVPDNATLGDALNTMVANRVRAVPVAAKPGQWLGAGGSMIVELDKQSGSARKQYIGMVTMLDVVAHIAGDDGESGLDKKMAAPVSSIIGHCPEGLSLWSLNPNTSIMDCMEMLSKGIHRVLVPLDSNTENITGPELVESASAYAMLSQMDLISFFFDQSSQLHGILSHTVTDLSAIHNTVLALTSQARVKDAIQCMSIAMLNAVPIVEASGEGEDHKQLVDGKNRRVVGTFSASDLKGCHLATLRSWLPLNALEFVEKIPRTLLFTAATSTPGRELVTCHVTSTLAQVIHMVTTKRVHRVWVVDQNGGLQGLVSLTDIIAVVRSALLSGAPDLF.

CBS domains are found at residues methionine 16 to serine 97, histidine 113 to leucine 185, alanine 198 to leucine 273, and serine 293 to serine 351.

This sequence belongs to the 5'-AMP-activated protein kinase gamma subunit family. Expressed highly in rosette leaves, cauline leaves, open flowers, developing siliques and dry seeds, but at a low level in stems and floral buds.

Its function is as follows. Plays redundant role with PV42a in regulating male gametogenesis and pollen tube guidance. The chain is SNF1-related protein kinase regulatory subunit gamma-like PV42b (PV42B) from Arabidopsis thaliana (Mouse-ear cress).